The following is a 508-amino-acid chain: Steroid 17-alpha-hydroxylase/17,20 lyase (508 aa).

Residue Asn-202 coordinates substrate. Cys-442 provides a ligand contact to heme.

This sequence belongs to the cytochrome P450 family. Requires heme as cofactor.

Its subcellular location is the endoplasmic reticulum membrane. The protein localises to the microsome membrane. The catalysed reaction is a C21-steroid + reduced [NADPH--hemoprotein reductase] + O2 = a 17alpha-hydroxy-C21-steroid + oxidized [NADPH--hemoprotein reductase] + H2O + H(+). It carries out the reaction progesterone + reduced [NADPH--hemoprotein reductase] + O2 = 17alpha-hydroxyprogesterone + oxidized [NADPH--hemoprotein reductase] + H2O + H(+). It catalyses the reaction pregnenolone + reduced [NADPH--hemoprotein reductase] + O2 = 17alpha-hydroxypregnenolone + oxidized [NADPH--hemoprotein reductase] + H2O + H(+). The enzyme catalyses 17alpha-hydroxyprogesterone + reduced [NADPH--hemoprotein reductase] + O2 = androst-4-ene-3,17-dione + acetate + oxidized [NADPH--hemoprotein reductase] + H2O + 2 H(+). The catalysed reaction is 17alpha-hydroxyprogesterone + reduced [NADPH--hemoprotein reductase] + O2 = 16alpha,17alpha-dihydroxyprogesterone + oxidized [NADPH--hemoprotein reductase] + H2O + H(+). It carries out the reaction 16alpha,17alpha-dihydroxyprogesterone + reduced [NADPH--hemoprotein reductase] + O2 = 6beta,16alpha,17alpha-trihydroxyprogesterone + oxidized [NADPH--hemoprotein reductase] + H2O + H(+). It catalyses the reaction 17alpha-hydroxypregnenolone + reduced [NADPH--hemoprotein reductase] + O2 = 3beta-hydroxyandrost-5-en-17-one + acetate + oxidized [NADPH--hemoprotein reductase] + H2O + 2 H(+). The enzyme catalyses 16alpha,17alpha-dihydroxypregnenolone + reduced [NADPH--hemoprotein reductase] + O2 = 3beta,16alpha-dihydroxy-androst-5-en-17-one + acetate + oxidized [NADPH--hemoprotein reductase] + H2O + 2 H(+). The catalysed reaction is 3beta-hydroxyandrost-5-en-17-one + reduced [NADPH--hemoprotein reductase] + O2 = 3beta,16alpha-dihydroxy-androst-5-en-17-one + oxidized [NADPH--hemoprotein reductase] + H2O + H(+). It carries out the reaction androst-4-ene-3,17-dione + reduced [NADPH--hemoprotein reductase] + O2 = 16alpha-hydroxyandrost-4-ene-3,17-dione + oxidized [NADPH--hemoprotein reductase] + H2O + H(+). It functions in the pathway steroid hormone biosynthesis. The protein operates within steroid biosynthesis; glucocorticoid biosynthesis. Its activity is regulated as follows. Regulated predominantly by intracellular cAMP levels. The 17,20-lyase activity is stimulated by cytochrome b5, which acts as an allosteric effector increasing the Vmax of the lyase activity. A cytochrome P450 monooxygenase involved in corticoid and androgen biosynthesis. Catalyzes 17-alpha hydroxylation of C21 steroids, which is common for both pathways. A second oxidative step, required only for androgen synthesis, involves an acyl-carbon cleavage. The 17-alpha hydroxy intermediates, as part of adrenal glucocorticoids biosynthesis pathway, are precursors of cortisol. Hydroxylates steroid hormones, pregnenolone and progesterone to form 17-alpha hydroxy metabolites, followed by the cleavage of the C17-C20 bond to form C19 steroids, dehydroepiandrosterone (DHEA) and androstenedione. Has 16-alpha hydroxylase activity. Catalyzes 16-alpha hydroxylation of 17-alpha hydroxy pregnenolone, followed by the cleavage of the C17-C20 bond to form 16-alpha-hydroxy DHEA. Also 16-alpha hydroxylates androgens, relevant for estriol synthesis. Mechanistically, uses molecular oxygen inserting one oxygen atom into a substrate, and reducing the second into a water molecule, with two electrons provided by NADPH via cytochrome P450 reductase (CPR; NADPH-ferrihemoprotein reductase). This Papio cynocephalus (Yellow baboon) protein is Steroid 17-alpha-hydroxylase/17,20 lyase (CYP17A1).